The primary structure comprises 552 residues: Membrane protein insertase YidC (552 aa).

The next 5 helical transmembrane spans lie at 7-24 (VLWV…DNWQ), 364-384 (WGWA…PLSA), 434-454 (LPVV…LASV), 473-493 (PFFI…SLNP), and 508-528 (PIAF…YYVV).

Belongs to the OXA1/ALB3/YidC family. Type 1 subfamily. In terms of assembly, interacts with the Sec translocase complex via SecD. Specifically interacts with transmembrane segments of nascent integral membrane proteins during membrane integration.

The protein resides in the cell inner membrane. Functionally, required for the insertion and/or proper folding and/or complex formation of integral membrane proteins into the membrane. Involved in integration of membrane proteins that insert both dependently and independently of the Sec translocase complex, as well as at least some lipoproteins. Aids folding of multispanning membrane proteins. The polypeptide is Membrane protein insertase YidC (Burkholderia cenocepacia (strain ATCC BAA-245 / DSM 16553 / LMG 16656 / NCTC 13227 / J2315 / CF5610) (Burkholderia cepacia (strain J2315))).